The primary structure comprises 449 residues: Probable phosphoglucosamine mutase (449 aa).

The Phosphoserine intermediate role is filled by Ser101. The Mg(2+) site is built by Ser101, Asp239, Asp241, and Asp243. The residue at position 101 (Ser101) is a Phosphoserine.

The protein belongs to the phosphohexose mutase family. Mg(2+) serves as cofactor. In terms of processing, activated by phosphorylation.

It carries out the reaction alpha-D-glucosamine 1-phosphate = D-glucosamine 6-phosphate. Its function is as follows. Catalyzes the conversion of glucosamine-6-phosphate to glucosamine-1-phosphate. This Methanothermobacter thermautotrophicus (strain ATCC 29096 / DSM 1053 / JCM 10044 / NBRC 100330 / Delta H) (Methanobacterium thermoautotrophicum) protein is Probable phosphoglucosamine mutase.